A 150-amino-acid polypeptide reads, in one-letter code: MTAFHSLNVSASALTAQRVRMDVVSSNLANMDTTRAKQVNGEWVPYRRKMVSLQSKGESFSSILNSQMSGSGNAGNGVKVSKITEDDSDFNLVYDPTDPDANAEGYVQKPNVDPLKEMVDLVSSTRSYEANVTAMNATKGMLMKALEIGK.

This sequence belongs to the flagella basal body rod proteins family. As to quaternary structure, the basal body constitutes a major portion of the flagellar organelle and consists of four rings (L,P,S, and M) mounted on a central rod. The rod consists of about 26 subunits of FlgG in the distal portion, and FlgB, FlgC and FlgF are thought to build up the proximal portion of the rod with about 6 subunits each.

The protein localises to the bacterial flagellum basal body. This chain is Flagellar basal-body rod protein FlgC (flgC), found in Bacillus subtilis (strain 168).